The following is a 118-amino-acid chain: Small ribosomal subunit protein uS13 (118 aa).

Positions 93–118 (RGLPVRGQRTKTNARTRKGPRKPIRK) are disordered.

The protein belongs to the universal ribosomal protein uS13 family. In terms of assembly, part of the 30S ribosomal subunit. Forms a loose heterodimer with protein S19. Forms two bridges to the 50S subunit in the 70S ribosome.

Located at the top of the head of the 30S subunit, it contacts several helices of the 16S rRNA. In the 70S ribosome it contacts the 23S rRNA (bridge B1a) and protein L5 of the 50S subunit (bridge B1b), connecting the 2 subunits; these bridges are implicated in subunit movement. Contacts the tRNAs in the A and P-sites. This chain is Small ribosomal subunit protein uS13, found in Pseudomonas syringae pv. tomato (strain ATCC BAA-871 / DC3000).